The chain runs to 424 residues: Histidine--tRNA ligase (424 aa).

Belongs to the class-II aminoacyl-tRNA synthetase family. As to quaternary structure, homodimer.

It localises to the cytoplasm. The catalysed reaction is tRNA(His) + L-histidine + ATP = L-histidyl-tRNA(His) + AMP + diphosphate + H(+). The chain is Histidine--tRNA ligase (hisS) from Bacillus subtilis (strain 168).